We begin with the raw amino-acid sequence, 376 residues long: Alcohol dehydrogenase 1 (376 aa).

The residue at position 2 (Ser-2) is an N-acetylserine. The Zn(2+) site is built by Cys-47, His-68, Cys-98, Cys-101, Cys-104, Cys-112, and Cys-176. NAD(+) contacts are provided by residues 201 to 206, Asp-225, Lys-230, 294 to 296, and Arg-371; these read GLGGVG and VGV.

This sequence belongs to the zinc-containing alcohol dehydrogenase family. Class-I subfamily. In terms of assembly, homodimer. Requires Zn(2+) as cofactor.

The protein resides in the cytoplasm. It catalyses the reaction a primary alcohol + NAD(+) = an aldehyde + NADH + H(+). The enzyme catalyses a secondary alcohol + NAD(+) = a ketone + NADH + H(+). This Gallus gallus (Chicken) protein is Alcohol dehydrogenase 1 (ADH1).